The sequence spans 284 residues: Cell wall mannoprotein 1 (284 aa).

The signal sequence occupies residues 1 to 17; it reads MRFSALLVTLGLTGALA. Positions 176–234 are enriched in low complexity; it reads SSTGTASSSAPATETATATETSTATGTVTETATSTPVIPTGTASGSASATPSTTATPTT. The interval 176-252 is disordered; the sequence is SSTGTASSSA…SSTGTATAST (77 aa).

Belongs to the cell wall mannoprotein 1 family. Galactomannoprotein, glycosylated.

It is found in the secreted. It localises to the cell wall. In terms of biological role, constitutive protein of the cell wall. Antigen target of host humoral immune response. The sequence is that of Cell wall mannoprotein 1 from Aspergillus fumigatus (Neosartorya fumigata).